A 419-amino-acid polypeptide reads, in one-letter code: uncharacterized protein (419 aa).

[4Fe-4S] cluster is bound by residues cysteine 38, cysteine 44, cysteine 47, and cysteine 126. Glutamine 250, tyrosine 280, glutamate 301, and aspartate 346 together coordinate S-adenosyl-L-methionine. Cysteine 373 (nucleophile) is an active-site residue.

Belongs to the class I-like SAM-binding methyltransferase superfamily. RNA M5U methyltransferase family.

This is an uncharacterized protein from Prochlorococcus marinus (strain SARG / CCMP1375 / SS120).